The chain runs to 425 residues: GTPase Obg (425 aa).

The 158-residue stretch at 1–158 (MFKDYAKIHV…LWLELELKLL (158 aa)) folds into the Obg domain. One can recognise an OBG-type G domain in the interval 159 to 329 (ADVGLVGFPN…LIYRTYRLLE (171 aa)). GTP is bound by residues 165 to 172 (GFPNAGKS), 190 to 194 (FTTLE), 212 to 215 (DIPG), 282 to 285 (NKTD), and 310 to 312 (SAL). Positions 172 and 192 each coordinate Mg(2+). An OCT domain is found at 341-421 (VPDERETDVT…IGRFEFEYSE (81 aa)).

The protein belongs to the TRAFAC class OBG-HflX-like GTPase superfamily. OBG GTPase family. In terms of assembly, monomer. It depends on Mg(2+) as a cofactor.

It localises to the cytoplasm. Functionally, an essential GTPase which binds GTP, GDP and possibly (p)ppGpp with moderate affinity, with high nucleotide exchange rates and a fairly low GTP hydrolysis rate. Plays a role in control of the cell cycle, stress response, ribosome biogenesis and in those bacteria that undergo differentiation, in morphogenesis control. The polypeptide is GTPase Obg (Desulforudis audaxviator (strain MP104C)).